We begin with the raw amino-acid sequence, 120 residues long: MIF-like protein mif-2 (120 aa).

This sequence belongs to the MIF family.

This chain is MIF-like protein mif-2 (mif-2), found in Caenorhabditis elegans.